A 359-amino-acid chain; its full sequence is Peptide chain release factor 1 (359 aa).

N5-methylglutamine is present on Gln-236.

The protein belongs to the prokaryotic/mitochondrial release factor family. Methylated by PrmC. Methylation increases the termination efficiency of RF1.

The protein resides in the cytoplasm. In terms of biological role, peptide chain release factor 1 directs the termination of translation in response to the peptide chain termination codons UAG and UAA. In Streptococcus agalactiae serotype Ia (strain ATCC 27591 / A909 / CDC SS700), this protein is Peptide chain release factor 1.